Consider the following 506-residue polypeptide: Glutamate--tRNA ligase (506 aa).

A 'HIGH' region motif is present at residues 9–19 (PSPTGFQHIGG). Positions 251-255 (KLSKR) match the 'KMSKS' region motif. K254 is an ATP binding site.

This sequence belongs to the class-I aminoacyl-tRNA synthetase family. Glutamate--tRNA ligase type 1 subfamily. Monomer.

The protein localises to the cytoplasm. The enzyme catalyses tRNA(Glu) + L-glutamate + ATP = L-glutamyl-tRNA(Glu) + AMP + diphosphate. Functionally, catalyzes the attachment of glutamate to tRNA(Glu) in a two-step reaction: glutamate is first activated by ATP to form Glu-AMP and then transferred to the acceptor end of tRNA(Glu). The polypeptide is Glutamate--tRNA ligase (Treponema denticola (strain ATCC 35405 / DSM 14222 / CIP 103919 / JCM 8153 / KCTC 15104)).